Consider the following 282-residue polypeptide: Heterogeneous nuclear ribonucleoprotein C (282 aa).

The RRM domain occupies 17 to 88 (SRVFIGNLNT…QVLDINLAAE (72 aa)). Disordered stretches follow at residues 131–177 (APPP…RLKG) and 208–282 (QSKQ…EEDS). The Nuclear localization signal motif lies at 141–147 (PSKRQRV). Over residues 161-172 (SKSGQRGGSSKS) the composition is skewed to low complexity. Residues 177 to 217 (GDDLQAIKKELSQIKQRVDSLLENLERIERDQSKQDTKLDD) adopt a coiled-coil conformation. Composition is skewed to basic and acidic residues over residues 208-217 (QSKQDTKLDD) and 224-235 (LKKEETGVKLIE). 2 stretches are compositionally biased toward acidic residues: residues 236 to 257 (ETGD…EDTL) and 265 to 282 (KETE…EEDS).

It belongs to the RRM HNRPC family. RALY subfamily. Tetramer.

Its subcellular location is the nucleus. Binds pre-mRNA and nucleates the assembly of 40S hnRNP particles. Interacts with poly-U tracts in the 3'-UTR or 5'-UTR of mRNA and modulates the stability and the level of translation of bound mRNA molecules. Single HNRNPC tetramers bind 230-240 nucleotides. Trimers of HNRNPC tetramers bind 700 nucleotides. May play a role in the early steps of spliceosome assembly and pre-mRNA splicing. N6-methyladenosine (m6A) has been shown to alter the local structure in mRNAs and long non-coding RNAs (lncRNAs) via a mechanism named 'm(6)A-switch', facilitating binding of HNRNPC, leading to regulation of mRNA splicing. The sequence is that of Heterogeneous nuclear ribonucleoprotein C (hnrnpc) from Xenopus laevis (African clawed frog).